Here is a 321-residue protein sequence, read N- to C-terminus: MNKENHSLIAEFILTGFTYHPKLKTVLFVVFFAIYLITMVGNIGLVALIYIEQRLHTPMYIFLGNLVLMDSCCSSAITPKMLENFFSEDKRITLYECMAQFYFLCLAETTDCFLLAAMAYDCYVAICNPLQYHTMMSKTLCIQMTAGAYLAGNLHPMIEVEFLLRLTFCGSHQINHFFCDVLPLYRLSCINPYINELVLFILAGSIQIFTIVLVSYFYILFTIFTMKSKEGRGKALSTCASHFLSVSIFCDSLLFMYARPGAVNEGDKDIPVAIFYTLVIPLLNPFIYSLRNKEVINIMKKIMKKRKFCHILKQMSSPLAT.

The Extracellular portion of the chain corresponds to 1–25; the sequence is MNKENHSLIAEFILTGFTYHPKLKT. N-linked (GlcNAc...) asparagine glycosylation is present at N5. A helical membrane pass occupies residues 26 to 46; it reads VLFVVFFAIYLITMVGNIGLV. Residues 47–56 lie on the Cytoplasmic side of the membrane; the sequence is ALIYIEQRLH. Residues 57–77 traverse the membrane as a helical segment; the sequence is TPMYIFLGNLVLMDSCCSSAI. At 78–97 the chain is on the extracellular side; the sequence is TPKMLENFFSEDKRITLYEC. Residues C97 and C179 are joined by a disulfide bond. The helical transmembrane segment at 98–118 threads the bilayer; sequence MAQFYFLCLAETTDCFLLAAM. Over 119–143 the chain is Cytoplasmic; that stretch reads AYDCYVAICNPLQYHTMMSKTLCIQ. A helical membrane pass occupies residues 144–164; it reads MTAGAYLAGNLHPMIEVEFLL. The Extracellular segment spans residues 165–196; the sequence is RLTFCGSHQINHFFCDVLPLYRLSCINPYINE. Residues 197–217 traverse the membrane as a helical segment; it reads LVLFILAGSIQIFTIVLVSYF. Residues 218–235 are Cytoplasmic-facing; that stretch reads YILFTIFTMKSKEGRGKA. A helical membrane pass occupies residues 236 to 256; that stretch reads LSTCASHFLSVSIFCDSLLFM. At 257-269 the chain is on the extracellular side; that stretch reads YARPGAVNEGDKD. A helical transmembrane segment spans residues 270 to 290; that stretch reads IPVAIFYTLVIPLLNPFIYSL. The Cytoplasmic portion of the chain corresponds to 291-321; that stretch reads RNKEVINIMKKIMKKRKFCHILKQMSSPLAT.

Belongs to the G-protein coupled receptor 1 family.

It localises to the cell membrane. Its function is as follows. Odorant receptor. The polypeptide is Olfactory receptor 5K3 (OR5K3) (Homo sapiens (Human)).